Reading from the N-terminus, the 102-residue chain is Large ribosomal subunit protein bL21 (102 aa).

Belongs to the bacterial ribosomal protein bL21 family. As to quaternary structure, part of the 50S ribosomal subunit. Contacts protein L20.

This protein binds to 23S rRNA in the presence of protein L20. This Ehrlichia chaffeensis (strain ATCC CRL-10679 / Arkansas) protein is Large ribosomal subunit protein bL21.